The chain runs to 85 residues: Cytochrome c6 (85 aa).

Heme c is bound by residues Cys-14, Cys-17, His-18, and Met-58.

It belongs to the cytochrome c family. PetJ subfamily. As to quaternary structure, monomer. Post-translationally, binds 1 heme c group covalently per subunit.

The protein resides in the cellular thylakoid lumen. Functions as an electron carrier between membrane-bound cytochrome b6-f and photosystem I in oxygenic photosynthesis. The polypeptide is Cytochrome c6 (petJ) (Leptolyngbya boryana (Plectonema boryanum)).